The sequence spans 222 residues: ATP-dependent dethiobiotin synthetase BioD (222 aa).

12 to 17 (DAGKTV) is a binding site for ATP. A Mg(2+)-binding site is contributed by Thr16. Lys37 is a catalytic residue. Position 41 (Ser41) interacts with substrate. Residues Asp54, 116 to 119 (EGAG), 176 to 177 (VQ), 206 to 208 (PYL), and Glu213 contribute to the ATP site. Residues Asp54 and Glu116 each contribute to the Mg(2+) site.

This sequence belongs to the dethiobiotin synthetase family. In terms of assembly, homodimer. Mg(2+) is required as a cofactor.

It is found in the cytoplasm. The enzyme catalyses (7R,8S)-7,8-diammoniononanoate + CO2 + ATP = (4R,5S)-dethiobiotin + ADP + phosphate + 3 H(+). The protein operates within cofactor biosynthesis; biotin biosynthesis; biotin from 7,8-diaminononanoate: step 1/2. Catalyzes a mechanistically unusual reaction, the ATP-dependent insertion of CO2 between the N7 and N8 nitrogen atoms of 7,8-diaminopelargonic acid (DAPA, also called 7,8-diammoniononanoate) to form a ureido ring. The protein is ATP-dependent dethiobiotin synthetase BioD of Idiomarina loihiensis (strain ATCC BAA-735 / DSM 15497 / L2-TR).